Here is a 132-residue protein sequence, read N- to C-terminus: Acyl carrier protein 3, chloroplastic (132 aa).

The N-terminal 49 residues, 1 to 49 (MASIAGSAVSFAKPVKAINTNSLSFSGARRGNAFLRLQPVPMRFAVCCS), are a transit peptide targeting the chloroplast. In terms of domain architecture, Carrier spans 52 to 127 (QDTVEKVCEI…DAATLIDKLV (76 aa)). At Ser-87 the chain carries O-(pantetheine 4'-phosphoryl)serine.

Belongs to the acyl carrier protein (ACP) family. 4'-phosphopantetheine is transferred from CoA to a specific serine of apo-ACP by acpS. This modification is essential for activity because fatty acids are bound in thioester linkage to the sulfhydryl of the prosthetic group.

Its subcellular location is the plastid. The protein resides in the chloroplast. Its pathway is lipid metabolism; fatty acid biosynthesis. Carrier of the growing fatty acid chain in fatty acid biosynthesis. This chain is Acyl carrier protein 3, chloroplastic (ACL1.3), found in Hordeum vulgare (Barley).